The following is a 199-amino-acid chain: Protein C (199 aa).

2 stretches are compositionally biased toward polar residues: residues 19–34 and 43–57; these read QLIS…SYSA and KTTQ…SAPP. The segment at 19–67 is disordered; sequence QLISPRPSTSLNSYSAPTPKKTYRKTTQSTQEPSNSAPPSVNQKSNQQK. Residues 58 to 67 show a composition bias toward low complexity; it reads SVNQKSNQQK.

This sequence belongs to the respirovirus protein C family.

The sequence is that of Protein C (P/V/C) from Human parainfluenza 3 virus (strain Wash/47885/57) (HPIV-3).